A 162-amino-acid chain; its full sequence is UPF0260 protein Caul_3920 (162 aa).

It belongs to the UPF0260 family.

The polypeptide is UPF0260 protein Caul_3920 (Caulobacter sp. (strain K31)).